The chain runs to 232 residues: Dysfunctional anti-sigma-K factor RskA (232 aa).

Residues 1 to 90 (MTEHTDFELL…EVRRQSRWRT (90 aa)) lie on the Cytoplasmic side of the membrane. Residues 91-111 (AAFASAAAIAVGLGAFDLGVL) traverse the membrane as a helical segment. At 112-232 (TRPSPPPTVA…GTILAELPLG (121 aa)) the chain is on the extracellular side.

The protein belongs to the anti-sigma-K factor family.

It is found in the cell membrane. Functionally, an anti-sigma factor for extracytoplasmic function (ECF) sigma factor SigK. ECF sigma factors are held in an inactive form by an anti-sigma factor until released by regulated intramembrane proteolysis (RIP). However, in M.bovis this protein is probably dysfunctional, due to at least 1 of the 2 naturally occurring polymorphisms in its gene, when compared to M.tuberculosis. This leads to an increased expression of SigK-regulated genes, such as mpb70 and mpb83. RIP occurs when an extracytoplasmic signal triggers a concerted proteolytic cascade to transmit information and elicit cellular responses. The membrane-spanning regulatory substrate protein is first cut extracytoplasmically (site-1 protease, S1P), then within the membrane itself (site-2 protease, S2P, Rip1), while cytoplasmic proteases finish degrading the regulatory protein, liberating the sigma factor. The chain is Dysfunctional anti-sigma-K factor RskA (rskA) from Mycobacterium bovis (strain ATCC BAA-935 / AF2122/97).